The sequence spans 459 residues: Cysteine--tRNA ligase (459 aa).

Zn(2+) is bound at residue cysteine 31. The 'HIGH' region signature appears at proline 33 to asparagine 43. Cysteine 216, histidine 241, and glutamate 245 together coordinate Zn(2+). Positions lysine 274–serine 278 match the 'KMSKS' region motif. An ATP-binding site is contributed by lysine 277.

Belongs to the class-I aminoacyl-tRNA synthetase family. In terms of assembly, monomer. It depends on Zn(2+) as a cofactor.

Its subcellular location is the cytoplasm. The catalysed reaction is tRNA(Cys) + L-cysteine + ATP = L-cysteinyl-tRNA(Cys) + AMP + diphosphate. This Rickettsia conorii (strain ATCC VR-613 / Malish 7) protein is Cysteine--tRNA ligase.